Consider the following 36-residue polypeptide: uncharacterized protein (36 aa).

This is an uncharacterized protein from Escherichia coli (strain K12).